A 101-amino-acid chain; its full sequence is MLSLAHFLVLGAILFAISIVGIFLNRKNVIVLLMALELLLLAVNMNFVAFSHYMGDLAGQVFVFFILTVAAAESAIGLAILVVLFRNLDTINVDDMDTLKG.

3 consecutive transmembrane segments (helical) span residues Leu4–Leu24, Ile30–Phe50, and Val61–Leu81.

It belongs to the complex I subunit 4L family. NDH-1 is composed of 14 different subunits. Subunits NuoA, H, J, K, L, M, N constitute the membrane sector of the complex.

The protein resides in the cell inner membrane. It catalyses the reaction a quinone + NADH + 5 H(+)(in) = a quinol + NAD(+) + 4 H(+)(out). In terms of biological role, NDH-1 shuttles electrons from NADH, via FMN and iron-sulfur (Fe-S) centers, to quinones in the respiratory chain. The immediate electron acceptor for the enzyme in this species is believed to be ubiquinone. Couples the redox reaction to proton translocation (for every two electrons transferred, four hydrogen ions are translocated across the cytoplasmic membrane), and thus conserves the redox energy in a proton gradient. The chain is NADH-quinone oxidoreductase subunit K from Cupriavidus metallidurans (strain ATCC 43123 / DSM 2839 / NBRC 102507 / CH34) (Ralstonia metallidurans).